The chain runs to 403 residues: D-mannonate dehydratase CC0532 (403 aa).

Substrate is bound by residues Asn38 and His123. The Proton donor/acceptor role is filled by Tyr160. Residue Asp211 coordinates Mg(2+). His213 acts as the Proton donor/acceptor in catalysis. Residues Glu237 and Glu263 each coordinate Mg(2+). 5 residues coordinate substrate: Glu263, Arg284, His313, Asp317, and Glu340.

It belongs to the mandelate racemase/muconate lactonizing enzyme family. GalD subfamily. It depends on Mg(2+) as a cofactor.

The enzyme catalyses D-mannonate = 2-dehydro-3-deoxy-D-gluconate + H2O. Its pathway is carbohydrate metabolism; pentose and glucuronate interconversion. Functionally, catalyzes the dehydration of D-mannonate. Has no detectable activity with a panel of 70 other acid sugars (in vitro). The chain is D-mannonate dehydratase CC0532 from Caulobacter vibrioides (strain ATCC 19089 / CIP 103742 / CB 15) (Caulobacter crescentus).